The chain runs to 339 residues: Uroporphyrinogen decarboxylase (339 aa).

Residues Arg23–Arg27, Asp72, Tyr147, Thr202, and His315 contribute to the substrate site.

Belongs to the uroporphyrinogen decarboxylase family. As to quaternary structure, homodimer.

The protein localises to the cytoplasm. The enzyme catalyses uroporphyrinogen III + 4 H(+) = coproporphyrinogen III + 4 CO2. It participates in porphyrin-containing compound metabolism; protoporphyrin-IX biosynthesis; coproporphyrinogen-III from 5-aminolevulinate: step 4/4. Functionally, catalyzes the decarboxylation of four acetate groups of uroporphyrinogen-III to yield coproporphyrinogen-III. This chain is Uroporphyrinogen decarboxylase, found in Geotalea uraniireducens (strain Rf4) (Geobacter uraniireducens).